The chain runs to 426 residues: Glucan 1,3-beta-glucosidase (426 aa).

An N-terminal signal peptide occupies residues 1-20 (MLYPRALLPAAVALASLVLA). The active-site Proton donor is Glu-208. Disulfide bonds link Cys-290–Cys-416 and Cys-315–Cys-343. Glu-307 acts as the Nucleophile in catalysis.

Belongs to the glycosyl hydrolase 5 (cellulase A) family.

The protein localises to the secreted. It carries out the reaction Successive hydrolysis of beta-D-glucose units from the non-reducing ends of (1-&gt;3)-beta-D-glucans, releasing alpha-glucose.. In terms of biological role, beta-glucanases participate in the metabolism of beta-glucan, the main structural component of the cell wall. It could also function biosynthetically as a transglycosylase. The protein is Glucan 1,3-beta-glucosidase of Blumeria graminis (Powdery mildew).